Reading from the N-terminus, the 94-residue chain is DNA-binding protein HU (94 aa).

The tract at residues 55–94 is disordered; it reads RAERPGRNPKTGEPIMIAASNNPSFKPGKALKDAVKSSAG. Over residues 84–94 the composition is skewed to basic and acidic residues; the sequence is ALKDAVKSSAG.

This sequence belongs to the bacterial histone-like protein family.

Its function is as follows. Histone-like DNA-binding protein which is capable of wrapping DNA to stabilize it, and thus to prevent its denaturation under extreme environmental conditions. This Xylella fastidiosa (strain Temecula1 / ATCC 700964) protein is DNA-binding protein HU (hup).